The chain runs to 91 residues: DNA-binding protein HRL18 (91 aa).

Belongs to the bacterial histone-like protein family.

In terms of biological role, histone-like DNA-binding protein which is capable of wrapping DNA to stabilize it, and thus to prevent its denaturation under extreme environmental conditions. The polypeptide is DNA-binding protein HRL18 (Rhizobium leguminosarum).